The sequence spans 487 residues: Aspartyl/glutamyl-tRNA(Asn/Gln) amidotransferase subunit B (487 aa).

The protein belongs to the GatB/GatE family. GatB subfamily. Heterotrimer of A, B and C subunits.

It catalyses the reaction L-glutamyl-tRNA(Gln) + L-glutamine + ATP + H2O = L-glutaminyl-tRNA(Gln) + L-glutamate + ADP + phosphate + H(+). It carries out the reaction L-aspartyl-tRNA(Asn) + L-glutamine + ATP + H2O = L-asparaginyl-tRNA(Asn) + L-glutamate + ADP + phosphate + 2 H(+). Its function is as follows. Allows the formation of correctly charged Asn-tRNA(Asn) or Gln-tRNA(Gln) through the transamidation of misacylated Asp-tRNA(Asn) or Glu-tRNA(Gln) in organisms which lack either or both of asparaginyl-tRNA or glutaminyl-tRNA synthetases. The reaction takes place in the presence of glutamine and ATP through an activated phospho-Asp-tRNA(Asn) or phospho-Glu-tRNA(Gln). The protein is Aspartyl/glutamyl-tRNA(Asn/Gln) amidotransferase subunit B of Chlamydia abortus (strain DSM 27085 / S26/3) (Chlamydophila abortus).